Reading from the N-terminus, the 125-residue chain is Apolipoprotein C-IV (125 aa).

Residues 1–27 (MSLLRQRLQALPVLCLCVLVLACIGAC) form the signal peptide.

Belongs to the apolipoprotein C4 family.

Its subcellular location is the secreted. Functionally, may participate in lipoprotein metabolism. The polypeptide is Apolipoprotein C-IV (APOC4) (Plecturocebus moloch (Dusky titi monkey)).